The sequence spans 294 residues: ATP phosphoribosyltransferase (294 aa).

This sequence belongs to the ATP phosphoribosyltransferase family. Long subfamily. Requires Mg(2+) as cofactor.

It is found in the cytoplasm. It carries out the reaction 1-(5-phospho-beta-D-ribosyl)-ATP + diphosphate = 5-phospho-alpha-D-ribose 1-diphosphate + ATP. Its pathway is amino-acid biosynthesis; L-histidine biosynthesis; L-histidine from 5-phospho-alpha-D-ribose 1-diphosphate: step 1/9. With respect to regulation, feedback inhibited by histidine. Catalyzes the condensation of ATP and 5-phosphoribose 1-diphosphate to form N'-(5'-phosphoribosyl)-ATP (PR-ATP). Has a crucial role in the pathway because the rate of histidine biosynthesis seems to be controlled primarily by regulation of HisG enzymatic activity. This is ATP phosphoribosyltransferase from Prosthecochloris aestuarii (strain DSM 271 / SK 413).